The chain runs to 187 residues: Pumilio homolog 26 (187 aa).

One copy of the Pumilio 1; degenerate repeat lies at 20 to 42 (VATEFLRVSNDVAELHKLSSKLT). One copy of the Pumilio 2; degenerate repeat lies at 43–78 (SDPYLFVEFVKTIRGFLSVQTALGLSGEIDTVFLQV). The Pumilio 3; degenerate repeat unit spans residues 79 to 116 (IKGWFPDLITETFSFLIVVRIINLFNKRANSKVYPDIL). Residues 117-154 (RRIGNNALYLTRNPLRGICLVEKAINVRDPDCTVFIAL) form a Pumilio 4; degenerate repeat. The stretch at 155–187 (KLHSHYVELSFEELGSNIVEKLLSVGESGICGV) is one Pumilio 5 repeat.

It is found in the cytoplasm. In terms of biological role, sequence-specific RNA-binding protein that regulates translation and mRNA stability by binding the 3'-UTR of target mRNAs. This is Pumilio homolog 26 (APUM26) from Arabidopsis thaliana (Mouse-ear cress).